We begin with the raw amino-acid sequence, 491 residues long: ADP-specific phosphofructokinase (491 aa).

In terms of domain architecture, ADPK spans 4 to 486; the sequence is EEWEQRHAEA…FVAMLAKIKQ (483 aa). Residues glutamate 281, glutamate 312, and aspartate 470 each contribute to the Mg(2+) site. Catalysis depends on aspartate 470, which acts as the Proton acceptor.

Belongs to the carbohydrate kinase PfkC family. Mg(2+) is required as a cofactor.

It localises to the cytoplasm. It carries out the reaction beta-D-fructose 6-phosphate + ADP = beta-D-fructose 1,6-bisphosphate + AMP + H(+). Its pathway is carbohydrate degradation; glycolysis. In terms of biological role, catalyzes the phosphorylation of fructose 6-phosphate to fructose 1,6-bisphosphate using ADP as the phosphate donor. This chain is ADP-specific phosphofructokinase, found in Methanosarcina acetivorans (strain ATCC 35395 / DSM 2834 / JCM 12185 / C2A).